Here is a 307-residue protein sequence, read N- to C-terminus: MLKEEVLRLKREKNAVILAHNYQLPEVKDVADFIGDSLNLSMEAARTKADIIVFAGVYFMAETAAILNPDKKVLIPDPGAGCSLASSVSAADVLEWRRRHPNGVVVAYINTYAEVKAVSDYVCTSANCLKIIEAIPSDRPVLFLPDKYLGLYIKAKTGREIDIWDGECHVHAKITSPKITAKIKLYRDAEVLIHPECGCGTACLLELPKMGLSPKFLSTEGMVKYVKQSPARRFIIATEVGIIDRLEREAPGKEYIPAAEDAICEYMKLITLDKVHRSLKEEIYRVVVPEDIAKKARLAIERMFEFA.

The iminosuccinate site is built by His20 and Ser37. [4Fe-4S] cluster is bound at residue Cys82. Iminosuccinate contacts are provided by residues 108 to 110 and Ser125; that span reads YIN. Position 168 (Cys168) interacts with [4Fe-4S] cluster. Residues 194-196 and Thr219 each bind iminosuccinate; that span reads HPE. Residue Cys264 participates in [4Fe-4S] cluster binding.

The protein belongs to the quinolinate synthase family. Type 2 subfamily. [4Fe-4S] cluster serves as cofactor.

It is found in the cytoplasm. The catalysed reaction is iminosuccinate + dihydroxyacetone phosphate = quinolinate + phosphate + 2 H2O + H(+). The protein operates within cofactor biosynthesis; NAD(+) biosynthesis; quinolinate from iminoaspartate: step 1/1. In terms of biological role, catalyzes the condensation of iminoaspartate with dihydroxyacetone phosphate to form quinolinate. This is Quinolinate synthase from Pyrobaculum aerophilum (strain ATCC 51768 / DSM 7523 / JCM 9630 / CIP 104966 / NBRC 100827 / IM2).